Consider the following 134-residue polypeptide: Lymphocyte antigen 6 complex locus protein G6d (134 aa).

Positions 1–19 (MNSQLIGILFSALLGAALG) are cleaved as a signal peptide. In terms of domain architecture, UPAR/Ly6 spans 22 to 121 (MRCYDCGGGP…ASSSTPLCIL (100 aa)). 5 cysteine pairs are disulfide-bonded: Cys-24–Cys-48, Cys-27–Cys-35, Cys-42–Cys-76, Cys-82–Cys-101, and Cys-102–Cys-107. O-linked (GalNAc...) threonine glycosylation is present at Thr-68. Residue Asn-108 is the site of GPI-anchor amidated asparagine attachment. The propeptide at 109-134 (GAVASSSTPLCILAAVTTLAWLLSGQ) is removed in mature form.

As to quaternary structure, homodimer. In terms of processing, O-glycosylated.

It is found in the cell membrane. The sequence is that of Lymphocyte antigen 6 complex locus protein G6d (Ly6g6d) from Rattus norvegicus (Rat).